The primary structure comprises 184 residues: GMP synthase [glutamine-hydrolyzing] subunit A (184 aa).

The Glutamine amidotransferase type-1 domain occupies 3 to 184; that stretch reads RIVVVDNHGQ…ENFRDICAGD (182 aa). Catalysis depends on cysteine 73, which acts as the Nucleophile. Residues histidine 161 and glutamate 163 contribute to the active site.

Heterodimer composed of a glutamine amidotransferase subunit (A) and a GMP-binding subunit (B).

It carries out the reaction XMP + L-glutamine + ATP + H2O = GMP + L-glutamate + AMP + diphosphate + 2 H(+). It functions in the pathway purine metabolism; GMP biosynthesis; GMP from XMP (L-Gln route): step 1/1. In terms of biological role, catalyzes the synthesis of GMP from XMP. This chain is GMP synthase [glutamine-hydrolyzing] subunit A, found in Natronomonas pharaonis (strain ATCC 35678 / DSM 2160 / CIP 103997 / JCM 8858 / NBRC 14720 / NCIMB 2260 / Gabara) (Halobacterium pharaonis).